The following is a 215-amino-acid chain: Negative modulator of initiation of replication (215 aa).

The disordered stretch occupies residues 71–93; that stretch reads AETPKPSSEQEIRTPARKQSTQS. Residues 181–187 form an interaction with DNA region; sequence NTNSGRK.

The protein belongs to the SeqA family. Homodimer. Polymerizes to form helical filaments.

It is found in the cytoplasm. In terms of biological role, negative regulator of replication initiation, which contributes to regulation of DNA replication and ensures that replication initiation occurs exactly once per chromosome per cell cycle. Binds to pairs of hemimethylated GATC sequences in the oriC region, thus preventing assembly of replication proteins and re-initiation at newly replicated origins. Repression is relieved when the region becomes fully methylated. This Mannheimia succiniciproducens (strain KCTC 0769BP / MBEL55E) protein is Negative modulator of initiation of replication.